The chain runs to 541 residues: Ascorbate transporter, chloroplastic (541 aa).

A chloroplast-targeting transit peptide spans 1–28 (MALGGLISNRNFGSFIGSGNGCQRLGKS). Transmembrane regions (helical) follow at residues 133 to 155 (VIVL…MSIA), 170 to 190 (VGLI…LGGI), 199 to 219 (VVLG…PIAA), 221 to 241 (LGLP…GVAM), 263 to 283 (LVYS…PMLI), 286 to 306 (FGWP…FLLW), 352 to 372 (VWAL…LLTW), 390 to 410 (LLCV…GWIA), 430 to 450 (IGFL…TPAM), 481 to 501 (AGVL…FGTA), and 515 to 535 (VFKV…LFAT).

The protein belongs to the major facilitator superfamily. Sodium/anion cotransporter (TC 2.A.1.14) family. As to expression, expressed in stems, developing siliques, leaf mesophyll cells and sepals of mature flowers. Not detected in roots. Detected in palisade tissue rather than spongy tissue from the leaves.

The protein localises to the plastid. It is found in the chloroplast inner membrane. Its activity is regulated as follows. Insensitive to dehydroascorbate, p-isoascorbate, inorganic phosphate, glutamate, ATP, p-aminohippuric acid or tetraethylammonium. Its function is as follows. Inorganic phosphate and probable anion transporter. Ascorbate transporter bridging the chloroplast envelope. Transports ascorbate from the cytosol into the chloroplast. Requires chloride ions and the presence of an electrochemical potential across the membrane for activity. In Arabidopsis thaliana (Mouse-ear cress), this protein is Ascorbate transporter, chloroplastic (PHT4;4).